We begin with the raw amino-acid sequence, 842 residues long: Non-motile and phage-resistance protein (842 aa).

3 consecutive transmembrane segments (helical) span residues 29-50, 283-303, and 343-363; these read VFVRIAILAALLLLAVYTAFGV, GAFSLLVPLGVGIALALLLMI, and VYLSDVTGAMFGWGGGGVVSG. The 72-residue stretch at 318–389 folds into the PAS domain; that stretch reads SERRFRLAVE…QALANAAMYG (72 aa). In terms of domain architecture, Histidine kinase spans 607 to 830; that stretch reads NMSHELRTPL…TVSFTLPVRH (224 aa). His610 carries the phosphohistidine; by autocatalysis modification.

Its subcellular location is the cell membrane. The catalysed reaction is ATP + protein L-histidine = ADP + protein N-phospho-L-histidine.. In terms of biological role, member of the two-component regulatory system involved in the regulation of polar organelle development. PleC functions as a membrane-associated protein kinase that transfers phosphate to the response regulator PleD, leading to its activation. This is Non-motile and phage-resistance protein (pleC) from Caulobacter vibrioides (strain ATCC 19089 / CIP 103742 / CB 15) (Caulobacter crescentus).